A 134-amino-acid chain; its full sequence is Interleukin-5 (134 aa).

The first 19 residues, 1 to 19 (MRMLLHLSLLALGASYMYA), serve as a signal peptide directing secretion. Thr22 carries an O-linked (GalNAc...) threonine glycan. N-linked (GlcNAc...) asparagine glycosylation is found at Asn47 and Asn90.

The protein belongs to the IL-5 family. In terms of assembly, homodimer; disulfide-linked. Interacts with IL5RA. Interacts with CSF2RB.

The protein localises to the secreted. Homodimeric cytokine expressed predominantly by T-lymphocytes and NK cells that plays an important role in the survival, differentiation, and chemotaxis of eosinophils. Also acts on activated and resting B-cells to induce immunoglobulin production, growth, and differentiation. Mechanistically, exerts its biological effects through a receptor composed of IL5RA subunit and the cytokine receptor common subunit beta/CSF2RB. Binding to the receptor leads to activation of various kinases including LYN, SYK and JAK2 and thereby propagates signals through the RAS-MAPK and JAK-STAT5 pathways respectively. The chain is Interleukin-5 (IL5) from Cercocebus atys (Sooty mangabey).